Reading from the N-terminus, the 239-residue chain is MATPAQLGLMDAASPVMEEMIYFHDHVMLVLILITCLIFYSMLVLISSKYIYRFLTDGHVIETVWTVIPAIILVVVALPSLKLLYLTDELDNPQLTIKSVGHQWYWSYEYTDYYDIEFDSYMLPLGDLSKGDARLLEVDNRVVLPVDTSVRVLVTAADVIHSWTVPSLGLKMDAVPGRLNQLALQCSRVGTFYGQCSEICGANHSFMPIVIEAVPVEVFEGWCDMMLDEESLGSLNMKR.

The Mitochondrial intermembrane segment spans residues 1–26 (MATPAQLGLMDAASPVMEEMIYFHDH). The helical transmembrane segment at 27–48 (VMLVLILITCLIFYSMLVLISS) threads the bilayer. Topologically, residues 49–62 (KYIYRFLTDGHVIE) are mitochondrial matrix. Residues 63–82 (TVWTVIPAIILVVVALPSLK) traverse the membrane as a helical segment. Residues 83-239 (LLYLTDELDN…ESLGSLNMKR (157 aa)) lie on the Mitochondrial intermembrane side of the membrane. The Cu cation site is built by His-161, Cys-196, Glu-198, Cys-200, His-204, and Met-207. Glu-198 lines the Mg(2+) pocket.

Belongs to the cytochrome c oxidase subunit 2 family. Component of the cytochrome c oxidase (complex IV, CIV), a multisubunit enzyme composed of a catalytic core of 3 subunits and several supernumerary subunits. The complex exists as a monomer or a dimer and forms supercomplexes (SCs) in the inner mitochondrial membrane with ubiquinol-cytochrome c oxidoreductase (cytochrome b-c1 complex, complex III, CIII). Cu cation is required as a cofactor.

It localises to the mitochondrion inner membrane. It carries out the reaction 4 Fe(II)-[cytochrome c] + O2 + 8 H(+)(in) = 4 Fe(III)-[cytochrome c] + 2 H2O + 4 H(+)(out). Component of the cytochrome c oxidase, the last enzyme in the mitochondrial electron transport chain which drives oxidative phosphorylation. The respiratory chain contains 3 multisubunit complexes succinate dehydrogenase (complex II, CII), ubiquinol-cytochrome c oxidoreductase (cytochrome b-c1 complex, complex III, CIII) and cytochrome c oxidase (complex IV, CIV), that cooperate to transfer electrons derived from NADH and succinate to molecular oxygen, creating an electrochemical gradient over the inner membrane that drives transmembrane transport and the ATP synthase. Cytochrome c oxidase is the component of the respiratory chain that catalyzes the reduction of oxygen to water. Electrons originating from reduced cytochrome c in the intermembrane space (IMS) are transferred via the dinuclear copper A center (CU(A)) of subunit 2 and heme A of subunit 1 to the active site in subunit 1, a binuclear center (BNC) formed by heme A3 and copper B (CU(B)). The BNC reduces molecular oxygen to 2 water molecules using 4 electrons from cytochrome c in the IMS and 4 protons from the mitochondrial matrix. In Branchiostoma lanceolatum (Common lancelet), this protein is Cytochrome c oxidase subunit 2 (COII).